Here is a 492-residue protein sequence, read N- to C-terminus: Cell death protein 6 (492 aa).

Positions 19-29 are enriched in low complexity; it reads GNNINGEGSSS. The disordered stretch occupies residues 19-38; sequence GNNINGEGSSSPSTSAPQVK. The region spanning 55 to 215 is the PID domain; it reads INGHVEYVAR…YILKKKIVEL (161 aa). Disordered regions lie at residues 241–385 and 464–492; these read TGPP…STAA and TGDL…NLKQ. Positions 244-268 are enriched in pro residues; that stretch reads PIYPGLGPPALPLSPMPQGPPPNIP. The span at 300–312 shows a compositional bias: low complexity; the sequence is ASPSVSPASTSPS. Pro residues predominate over residues 313–333; the sequence is GPAPSIPPPRPPALAPPPPVA. Residues 373–383 show a composition bias toward basic and acidic residues; it reads FDPRAGEKKST.

Belongs to the ced-6 family. Homodimer. Interacts with ced-1. Interacts with E3 ubiquitin-protein ligase trim-21. In terms of tissue distribution, detected in gonadal sheath cells.

Its subcellular location is the cytoplasm. May function as an adapter protein in a pathway that mediates recognition and phagocytosis of apoptotic cells during normal development. Promotes engulfment of cells at both early and late stages of apoptosis. Required for actin reorganization around apoptotic cells. Plays a role in protecting dopaminergic neurons from oxidative stress-induced degeneration. Mediates recruitment of E3 ubiquitin-protein ligase trim-21 to the apoptotic cell surface which promotes ubiquitination and degradation of ced-1. The sequence is that of Cell death protein 6 from Caenorhabditis elegans.